The primary structure comprises 324 residues: D-alanine--D-alanine ligase (324 aa).

An ATP-grasp domain is found at 121-321; sequence NQYLKAFGVR…IKDVMTDIIE (201 aa). ATP is bound at residue 149–204; sequence VEKIGLPCFIKPNLGGSSFGVTKVKTREQIQPAIAKAFSEAEEVMIEAFMGGTELT. Positions 275, 288, and 290 each coordinate Mg(2+).

Belongs to the D-alanine--D-alanine ligase family. The cofactor is Mg(2+). Mn(2+) serves as cofactor.

The protein localises to the cytoplasm. The catalysed reaction is 2 D-alanine + ATP = D-alanyl-D-alanine + ADP + phosphate + H(+). It participates in cell wall biogenesis; peptidoglycan biosynthesis. In terms of biological role, cell wall formation. The sequence is that of D-alanine--D-alanine ligase from Bacteroides fragilis (strain YCH46).